Here is a 296-residue protein sequence, read N- to C-terminus: ATP synthase gamma chain (296 aa).

It belongs to the ATPase gamma chain family. As to quaternary structure, F-type ATPases have 2 components, CF(1) - the catalytic core - and CF(0) - the membrane proton channel. CF(1) has five subunits: alpha(3), beta(3), gamma(1), delta(1), epsilon(1). CF(0) has three main subunits: a, b and c.

It localises to the cell membrane. In terms of biological role, produces ATP from ADP in the presence of a proton gradient across the membrane. The gamma chain is believed to be important in regulating ATPase activity and the flow of protons through the CF(0) complex. This Pseudarthrobacter chlorophenolicus (strain ATCC 700700 / DSM 12829 / CIP 107037 / JCM 12360 / KCTC 9906 / NCIMB 13794 / A6) (Arthrobacter chlorophenolicus) protein is ATP synthase gamma chain.